The primary structure comprises 455 residues: tRNA modification GTPase MnmE (455 aa).

The (6S)-5-formyl-5,6,7,8-tetrahydrofolate site is built by arginine 24, glutamate 86, and arginine 125. Positions 220 to 376 constitute a TrmE-type G domain; it reads GLTVAIIGRP…LETAILETVQ (157 aa). Asparagine 230 is a binding site for K(+). Residues 230–235, 249–255, and 274–277 each bind GTP; these read NVGKSS, TDLPGTT, and DTAG. Serine 234 contacts Mg(2+). Positions 249, 251, and 254 each coordinate K(+). Threonine 255 lines the Mg(2+) pocket. Lysine 455 serves as a coordination point for (6S)-5-formyl-5,6,7,8-tetrahydrofolate.

This sequence belongs to the TRAFAC class TrmE-Era-EngA-EngB-Septin-like GTPase superfamily. TrmE GTPase family. Homodimer. Heterotetramer of two MnmE and two MnmG subunits. The cofactor is K(+).

Its subcellular location is the cytoplasm. Exhibits a very high intrinsic GTPase hydrolysis rate. Involved in the addition of a carboxymethylaminomethyl (cmnm) group at the wobble position (U34) of certain tRNAs, forming tRNA-cmnm(5)s(2)U34. This Acaryochloris marina (strain MBIC 11017) protein is tRNA modification GTPase MnmE.